Consider the following 895-residue polypeptide: Transcription factor SWI6 (895 aa).

A compositionally biased stretch (polar residues) spans 1-45; it reads MASTVAGNSFVSQQHPGNLHSANLQSQSQGFRRQNSTSSVPSTAS. Positions 1 to 107 are disordered; the sequence is MASTVAGNSF…SDQNVPQQPQ (107 aa). Low complexity predominate over residues 64 to 100; sequence MSSQQSQPPASQQSFSMSQTGSQPQPSQSSFRSYSDQ. One can recognise an HTH APSES-type domain in the interval 112–219; it reads IYTAVYSNVE…NRNPDGSVSQ (108 aa). A DNA-binding region (H-T-H motif) is located at residues 143–164; it reads ATQILKVAGVEKGKRTKILEKE. 2 disordered regions span residues 272–293 and 323–358; these read ARFD…SFQR and NMAF…NSFG. ANK repeat units lie at residues 458-488 and 607-636; these read QCHT…PFRV and AGDT…SPHI. Positions 653-684 are disordered; it reads SDGAMKTKGDSGGDVENGDVGGSSQKSNESSN. Residues 674–684 are compositionally biased toward polar residues; sequence GSSQKSNESSN. Positions 698–759 form a coiled coil; the sequence is SANFQEEIKN…VTNLQRAEER (62 aa).

Its subcellular location is the nucleus. Transcription factor that plays a role downstream of the MCK1-MKK2-MPS1 cascade. Required for hyphal morphogenesis and pathogenicity. Is an important oxidative stress response regulator and plays a positive role in the regulation of extracellular peroxidases. This chain is Transcription factor SWI6, found in Pyricularia oryzae (strain 70-15 / ATCC MYA-4617 / FGSC 8958) (Rice blast fungus).